Here is a 440-residue protein sequence, read N- to C-terminus: Transposon Ty1-BL Gag polyprotein (440 aa).

Composition is skewed to polar residues over residues 20-31, 46-55, and 137-168; these read SVTSKEVQTTQD, VSTQANSQQP, and VGTHLNTPSPESGNSFPDSSSAKSNMTSTNQH. Disordered stretches follow at residues 20 to 84, 137 to 173, and 350 to 424; these read SVTS…QNGP, VGTHLNTPSPESGNSFPDSSSAKSNMTSTNQHVRPPP, and QQES…TTEP. Residues 299–401 form an RNA-binding region; sequence NNGIPINNKV…NSQSRTARAH (103 aa). Over residues 363-372 the composition is skewed to basic and acidic residues; it reads SPSDEKKDSR. Residues 373–411 are compositionally biased toward polar residues; it reads TYTNTTKPKSITRNSQKPNNSQSRTARAHNVSTFNNSPG.

In terms of assembly, homotrimer.

It localises to the cytoplasm. Capsid protein (CA) is the structural component of the virus-like particle (VLP), forming the shell that encapsulates the retrotransposons dimeric RNA genome. The particles are assembled from trimer-clustered units and there are holes in the capsid shells that allow for the diffusion of macromolecules. CA also has nucleocapsid-like chaperone activity, promoting primer tRNA(i)-Met annealing to the multipartite primer-binding site (PBS), dimerization of Ty1 RNA and initiation of reverse transcription. This is Transposon Ty1-BL Gag polyprotein (TY1A-BL) from Saccharomyces cerevisiae (strain ATCC 204508 / S288c) (Baker's yeast).